A 346-amino-acid polypeptide reads, in one-letter code: uncharacterized protein (346 aa).

The first 28 residues, Met-1 to Gly-28, serve as a signal peptide directing secretion.

This is an uncharacterized protein from Methanocaldococcus jannaschii (strain ATCC 43067 / DSM 2661 / JAL-1 / JCM 10045 / NBRC 100440) (Methanococcus jannaschii).